The following is a 543-amino-acid chain: Sodium/glucose cotransporter (543 aa).

The next 14 helical transmembrane spans lie at 10–30 (FIDI…GLWV), 45–65 (FLAG…AANI), 79–99 (SIGL…IIVG), 129–149 (ILAV…VLYL), 156–176 (TILG…ALVY), 193–213 (VFFL…FIGG), 246–266 (LPGI…YWGF), 287–307 (IVFA…PGIA), 345–365 (FLPV…IVSS), 401–421 (TAAV…GGIG), 427–447 (IQEY…LGLF), 455–475 (GAII…FMPL), 483–503 (MLYT…STSI), and 523–543 (SFNI…TLFW).

The protein resides in the cell membrane. Functionally, actively transports glucose into cells by Na(+) cotransport. The protein is Sodium/glucose cotransporter (sglT) of Vibrio parahaemolyticus.